We begin with the raw amino-acid sequence, 1598 residues long: Structural maintenance of chromosomes flexible hinge domain-containing protein GMI1 (1598 aa).

The interval 1191-1218 (VTSAPTSEREESGYSTPHSKTTPPPESG) is disordered. Coiled-coil stretches lie at residues 1258 to 1301 (TEDL…ASLE) and 1565 to 1595 (EEMM…FTAM).

In terms of tissue distribution, highly expressed in closed buds and open flowers. Expressed at low levels in roots, stems, cauline leaves and siliques. Expressed in the region of the shoot and floral meristems.

The protein localises to the nucleus. Contributes to DNA double-strand break (DSB) repair via somatic homologous recombination. Functions downstream of ATM. In Arabidopsis thaliana (Mouse-ear cress), this protein is Structural maintenance of chromosomes flexible hinge domain-containing protein GMI1.